We begin with the raw amino-acid sequence, 233 residues long: Proteasome subunit beta type-6 (233 aa).

Residues 1–12 (MDLNLDAPHSMG) constitute a propeptide, removed in mature form. The active-site Nucleophile is threonine 13.

Belongs to the peptidase T1B family. Component of the 20S core complex of the 26S proteasome. The 26S proteasome is composed of a core protease (CP), known as the 20S proteasome, capped at one or both ends by the 19S regulatory particle (RP/PA700). The 20S proteasome core is composed of 28 subunits that are arranged in four stacked rings, resulting in a barrel-shaped structure. The two end rings are each formed by seven alpha subunits, and the two central rings are each formed by seven beta subunits. The catalytic chamber with the active sites is on the inside of the barrel.

The protein localises to the cytoplasm. Its subcellular location is the nucleus. It carries out the reaction Cleavage of peptide bonds with very broad specificity.. The proteasome is a multicatalytic proteinase complex which is characterized by its ability to cleave peptides with Arg, Phe, Tyr, Leu, and Glu adjacent to the leaving group at neutral or slightly basic pH. The proteasome has an ATP-dependent proteolytic activity. The sequence is that of Proteasome subunit beta type-6 (PBA1) from Arabidopsis thaliana (Mouse-ear cress).